We begin with the raw amino-acid sequence, 559 residues long: CTP synthase (559 aa).

The tract at residues 1–270 is amidoligase domain; that stretch reads MTKFVFVTGG…DGLICDKLRI (270 aa). Residue Ser13 participates in CTP binding. Residue Ser13 participates in UTP binding. Residues 14 to 19 and Asp71 contribute to the ATP site; that span reads SLGKGI. Mg(2+) is bound by residues Asp71 and Glu144. CTP is bound by residues 151 to 153, 191 to 196, and Lys227; these read DIE and KTKPTQ. UTP-binding positions include 191–196 and Lys227; that span reads KTKPTQ. Residues 295-547 form the Glutamine amidotransferase type-1 domain; sequence SIAMVGKYVD…IKAALDHKAR (253 aa). Gly356 contacts L-glutamine. The Nucleophile; for glutamine hydrolysis role is filled by Cys383. L-glutamine is bound by residues 384–387, Glu407, and Arg473; that span reads LGMQ. Catalysis depends on residues His520 and Glu522.

The protein belongs to the CTP synthase family. In terms of assembly, homotetramer.

The enzyme catalyses UTP + L-glutamine + ATP + H2O = CTP + L-glutamate + ADP + phosphate + 2 H(+). It catalyses the reaction L-glutamine + H2O = L-glutamate + NH4(+). It carries out the reaction UTP + NH4(+) + ATP = CTP + ADP + phosphate + 2 H(+). It functions in the pathway pyrimidine metabolism; CTP biosynthesis via de novo pathway; CTP from UDP: step 2/2. Allosterically activated by GTP, when glutamine is the substrate; GTP has no effect on the reaction when ammonia is the substrate. The allosteric effector GTP functions by stabilizing the protein conformation that binds the tetrahedral intermediate(s) formed during glutamine hydrolysis. Inhibited by the product CTP, via allosteric rather than competitive inhibition. Catalyzes the ATP-dependent amination of UTP to CTP with either L-glutamine or ammonia as the source of nitrogen. Regulates intracellular CTP levels through interactions with the four ribonucleotide triphosphates. This Variovorax paradoxus (strain S110) protein is CTP synthase.